Here is a 24-residue protein sequence, read N- to C-terminus: Xenoposin-precursor fragment B1 (24 aa).

Expressed by the skin glands.

It is found in the secreted. In terms of biological role, has antibacterial activity. The sequence is that of Xenoposin-precursor fragment B1 from Xenopus borealis (Kenyan clawed frog).